The following is a 172-amino-acid chain: Adenine phosphoribosyltransferase (172 aa).

Belongs to the purine/pyrimidine phosphoribosyltransferase family. Homodimer.

The protein localises to the cytoplasm. It catalyses the reaction AMP + diphosphate = 5-phospho-alpha-D-ribose 1-diphosphate + adenine. Its pathway is purine metabolism; AMP biosynthesis via salvage pathway; AMP from adenine: step 1/1. Functionally, catalyzes a salvage reaction resulting in the formation of AMP, that is energically less costly than de novo synthesis. This Desulforamulus reducens (strain ATCC BAA-1160 / DSM 100696 / MI-1) (Desulfotomaculum reducens) protein is Adenine phosphoribosyltransferase.